We begin with the raw amino-acid sequence, 449 residues long: Phosphoglucosamine mutase (449 aa).

S100 functions as the Phosphoserine intermediate in the catalytic mechanism. Residues S100, D241, D243, and D245 each contribute to the Mg(2+) site. S100 carries the post-translational modification Phosphoserine.

The protein belongs to the phosphohexose mutase family. Requires Mg(2+) as cofactor. Activated by phosphorylation.

It catalyses the reaction alpha-D-glucosamine 1-phosphate = D-glucosamine 6-phosphate. Its function is as follows. Catalyzes the conversion of glucosamine-6-phosphate to glucosamine-1-phosphate. The sequence is that of Phosphoglucosamine mutase from Clostridium botulinum (strain Kyoto / Type A2).